Reading from the N-terminus, the 724-residue chain is Catalase-peroxidase (724 aa).

Positions Trp-98–Tyr-226 form a cross-link, tryptophyl-tyrosyl-methioninium (Trp-Tyr) (with M-252). His-99 serves as the catalytic Proton acceptor. A cross-link (tryptophyl-tyrosyl-methioninium (Tyr-Met) (with W-98)) is located at residues Tyr-226–Met-252. His-267 serves as a coordination point for heme b.

It belongs to the peroxidase family. Peroxidase/catalase subfamily. As to quaternary structure, homodimer or homotetramer. It depends on heme b as a cofactor. Post-translationally, formation of the three residue Trp-Tyr-Met cross-link is important for the catalase, but not the peroxidase activity of the enzyme.

It catalyses the reaction H2O2 + AH2 = A + 2 H2O. The enzyme catalyses 2 H2O2 = O2 + 2 H2O. Functionally, bifunctional enzyme with both catalase and broad-spectrum peroxidase activity. This Edwardsiella tarda protein is Catalase-peroxidase.